The chain runs to 252 residues: Large ribosomal subunit protein uL4 (252 aa).

Belongs to the universal ribosomal protein uL4 family. As to quaternary structure, part of the 50S ribosomal subunit.

Its function is as follows. One of the primary rRNA binding proteins, this protein initially binds near the 5'-end of the 23S rRNA. It is important during the early stages of 50S assembly. It makes multiple contacts with different domains of the 23S rRNA in the assembled 50S subunit and ribosome. Forms part of the polypeptide exit tunnel. This Methanococcus maripaludis (strain C6 / ATCC BAA-1332) protein is Large ribosomal subunit protein uL4.